A 98-amino-acid chain; its full sequence is snRNA-activating protein complex subunit 5 (98 aa).

The segment covering 73–82 (QTTLELSTKS) has biased composition (polar residues). The disordered stretch occupies residues 73–98 (QTTLELSTKSHVTEEEEEEEEEESDS). The residue at position 85 (threonine 85) is a Phosphothreonine. A compositionally biased stretch (acidic residues) spans 86-98 (EEEEEEEEEESDS).

In terms of assembly, part of the SNAPc complex composed of 5 subunits: SNAPC1, SNAPC2, SNAPC3, SNAPC4 and SNAPC5. SNAPC5 interacts with SNAPC4.

It is found in the nucleus. Functionally, part of the SNAPc complex required for the transcription of both RNA polymerase II and III small-nuclear RNA genes. Binds to the proximal sequence element (PSE), a non-TATA-box basal promoter element common to these 2 types of genes. Recruits TBP and BRF2 to the U6 snRNA TATA box. The sequence is that of snRNA-activating protein complex subunit 5 (SNAPC5) from Homo sapiens (Human).